The chain runs to 93 residues: Protamine-3 (93 aa).

The tract at residues 1-93 (MGSRCAKLGT…QSPEPKQTRS (93 aa)) is disordered. Residues 37–57 (EGEEEEEGEEEEEEEGEEEEL) show a composition bias toward acidic residues. The span at 81 to 93 (EVQQSPEPKQTRS) shows a compositional bias: polar residues. At serine 85 the chain carries Phosphoserine.

This sequence belongs to the protamine P3 family.

The protein resides in the nucleus. Its subcellular location is the chromosome. In terms of biological role, protamines substitute for histones in the chromatin of sperm during the haploid phase of spermatogenesis. They compact sperm DNA into a highly condensed, stable and inactive complex. The chain is Protamine-3 (PRM3) from Bos taurus (Bovine).